Here is a 440-residue protein sequence, read N- to C-terminus: General transcription factor IIE subunit 1 (440 aa).

Position 2 is an N-acetylalanine (alanine 2). The region spanning 14–104 (LKRLAKYVIR…NYRTLVNVVK (91 aa)) is the HTH TFE/IIEalpha-type domain. Lysine 67 is modified (N6-acetyllysine). Cysteine 129, cysteine 132, cysteine 154, and cysteine 157 together coordinate Zn(2+). Residues 129–157 (CPVCCSTFTDLEANQLFDPMTGTFRCTFC) form a C4-type zinc finger. Serine 268 is subject to Phosphoserine. Positions 333–353 (SSVTAGSVGAAAPVTAANGSD) are enriched in low complexity. Residues 333-395 (SSVTAGSVGA…EEFEEVADDP (63 aa)) form a disordered region. 2 stretches are compositionally biased toward acidic residues: residues 354 to 364 (SESETSESDDD) and 381 to 393 (EDEE…EVAD).

It belongs to the TFIIE alpha subunit family. In terms of assembly, tetramer of two alpha and two beta chains. Interacts with TAF6/TAFII80. Interacts with ATF7IP. Interacts with SND1. Part of TBP-based Pol II pre-initiation complex (PIC), in which Pol II core assembles with general transcription factors and other specific initiation factors including GTF2E1, GTF2E2, GTF2F1, GTF2F2, TCEA1, ERCC2, ERCC3, GTF2H2, GTF2H3, GTF2H4, GTF2H5, GTF2A1, GTF2A2, GTF2B and TBP; this large multi-subunit PIC complex mediates DNA unwinding and targets Pol II core to the transcription start site where the first phosphodiester bond forms.

It localises to the nucleus. Recruits TFIIH to the initiation complex and stimulates the RNA polymerase II C-terminal domain kinase and DNA-dependent ATPase activities of TFIIH. Both TFIIH and TFIIE are required for promoter clearance by RNA polymerase. The protein is General transcription factor IIE subunit 1 (Gtf2e1) of Mus musculus (Mouse).